A 633-amino-acid polypeptide reads, in one-letter code: Probable potassium transport system protein Kup 3 (633 aa).

11 helical membrane passes run 61-81 (LVSLVLWTLTAIVTIKYVLFL), 107-127 (PVLMFFAGVLGAALFIGDAMI), 143-163 (VAPALHDYVLPISVVIILLLF), 173-193 (VSVFFGPITLVWFLVMAAAGV), 211-231 (AIGFLWNAGLIGFIVLGAIFL), 255-275 (WFAVVFPALALNYLGQGALVL), 287-307 (LMFPNWALLPMVILATAGTII), 345-365 (IYLPLVNTILLTGVLALMLMF), 371-391 (LAPAYGVSITGAMVIDTILAF), 402-422 (ALTAIAVLLPLFSLELIFLGA), and 427-447 (IHHGGYVPILIAGTLIMMMWT).

It belongs to the HAK/KUP transporter (TC 2.A.72) family.

The protein resides in the cell inner membrane. The enzyme catalyses K(+)(in) + H(+)(in) = K(+)(out) + H(+)(out). Transport of potassium into the cell. Likely operates as a K(+):H(+) symporter. In Sinorhizobium medicae (strain WSM419) (Ensifer medicae), this protein is Probable potassium transport system protein Kup 3.